Reading from the N-terminus, the 302-residue chain is Pathogenicity locus probable regulatory protein HrpS (302 aa).

Residues 9–237 (DDLDEERVPN…LKAAAKRHVL (229 aa)) form the Sigma-54 factor interaction domain. Residues 37–44 (GETGTGKD) and 99–108 (AQGGTLYLDE) contribute to the ATP site. A DNA-binding region (H-T-H motif) is located at residues 279-298 (IDAASLELDMPRRTLYRRIK).

Its function is as follows. Member of the two-component regulatory system HrpR/HrpS that regulates the activation of the sigma factor hrpL which itself induces the expression of hprD as well as other hrp loci which are involved in plant pathogenicity, hrmA and avr genes. Probably interacts with sigma-54. The chain is Pathogenicity locus probable regulatory protein HrpS (hrpS) from Pseudomonas savastanoi pv. phaseolicola (Pseudomonas syringae pv. phaseolicola).